The following is a 416-amino-acid chain: Probable sarcosine oxidase (416 aa).

An FAD-binding site is contributed by 10–40; it reads DVIVVGAGVMGSSAAYQLAKRGQKTLLLEQF. An S-8alpha-FAD cysteine modification is found at C325.

The protein belongs to the MSOX/MTOX family. It depends on FAD as a cofactor.

It catalyses the reaction sarcosine + O2 + H2O = formaldehyde + glycine + H2O2. This chain is Probable sarcosine oxidase, found in Arabidopsis thaliana (Mouse-ear cress).